A 222-amino-acid polypeptide reads, in one-letter code: Lipid A 4'-phosphatase (222 aa).

Residues 1-3 (MAR) are Cytoplasmic-facing. The helical transmembrane segment at 4 to 24 (FHIILGLVVCFFAWIFFLIFP) threads the bilayer. Residues 25 to 58 (NLDIQFAGHFYNSSAHQFIGGYDGFLGFLHWFAR) are Periplasmic-facing. The chain crosses the membrane as a helical span at residues 59-79 (FFPIFFSIIVILFLLGSLFID). At 80–87 (KFKIKYRK) the chain is on the cytoplasmic side. A helical membrane pass occupies residues 88 to 108 (AIFFIAVCLWIGPGLVVNYVF). The Periplasmic segment spans residues 109-144 (KDHWGRPRPVMVEQFNGDKIFQPPFVISSQCDKNCS). Residues 145 to 165 (FVCGDASMGFWLFAFMPLLAT) traverse the membrane as a helical segment. At 166 to 169 (RKKK) the chain is on the cytoplasmic side. Residues 170-190 (LVAFIAAVVAGGGLGLMRMSQ) traverse the membrane as a helical segment. Over 191 to 193 (GGH) the chain is Periplasmic. A helical transmembrane segment spans residues 194 to 214 (FFSDVVFCGIFVYISTWVVYA). The Cytoplasmic portion of the chain corresponds to 215–222 (LMYRKKEY).

Belongs to the lipid A LpxF 4'-phosphatase family.

It localises to the cell inner membrane. Its pathway is bacterial outer membrane biogenesis; LPS lipid A biosynthesis. In terms of biological role, removes the 4'-phosphate moiety from lipid IV(A) (a tetraacylated precursor of lipid A) and from pentaacylated lipid A, but not from hexaacylated lipid A (as is found in E.coli). Does not dephosphorylate phosphatidic acid, phosphatidylglycerophosphate, or the 1-phosphate group of lipid A and lipid A precursors. Its expression in E.coli confers resistance to the cationic antimicrobial peptide (CAMP) polymyxin B. Plays a critical role in the ability of the bacteria to avoid the host's innate immune system, especially the bactericidal action of CAMPs, although whether it is CAMP-sensitivity or increased sensitivity to the immune system is not clear. The sequence is that of Lipid A 4'-phosphatase from Francisella tularensis subsp. novicida (strain U112).